Here is a 460-residue protein sequence, read N- to C-terminus: A-type ATP synthase subunit B (460 aa).

The protein belongs to the ATPase alpha/beta chains family. As to quaternary structure, has multiple subunits with at least A(3), B(3), C, D, E, F, H, I and proteolipid K(x).

The protein resides in the cell membrane. Functionally, component of the A-type ATP synthase that produces ATP from ADP in the presence of a proton gradient across the membrane. The B chain is a regulatory subunit. This Thermoplasma acidophilum (strain ATCC 25905 / DSM 1728 / JCM 9062 / NBRC 15155 / AMRC-C165) protein is A-type ATP synthase subunit B.